The following is a 100-amino-acid chain: Large ribosomal subunit protein eL21 (100 aa).

A disordered region spans residues methionine 1–arginine 21.

This sequence belongs to the eukaryotic ribosomal protein eL21 family.

The chain is Large ribosomal subunit protein eL21 from Pyrobaculum islandicum (strain DSM 4184 / JCM 9189 / GEO3).